A 1203-amino-acid chain; its full sequence is Kinesin-like protein KIN-14Q (1203 aa).

Residues 1-28 (MEDCCDPLLATDASPRPESFSRSEKDIA) form a disordered region. The span at 19 to 28 (SFSRSEKDIA) shows a compositional bias: basic and acidic residues. Residues 336–395 (ENLVCRAEEEAEGMRSDCEQQRKEMEDMKRMVEELKLENQQKTRECEEALNSLSEIQNEL) are a coiled coil. The 327-residue stretch at 499 to 825 (NIRVFCRCRP…LNFASRVRGI (327 aa)) folds into the Kinesin motor domain. 582–589 (GQTGTGKT) is a binding site for ATP. Residues 846–901 (VEKWKQDMKGKDEQIRKMEETMYGLEAKIKERDTKNKTLQDKVKELESQLLVERKL) are a coiled coil. The tract at residues 907 to 931 (DTKIAEQQTKQQTEDENNTSKRPPL) is disordered.

It belongs to the TRAFAC class myosin-kinesin ATPase superfamily. Kinesin family. KIN-14 subfamily.

The sequence is that of Kinesin-like protein KIN-14Q from Arabidopsis thaliana (Mouse-ear cress).